The following is a 176-amino-acid chain: Cathelicidin-2 (176 aa).

A signal peptide spans 1–29 (METQGASLSLGRWSLWLLLLGLVLPSASA). The residue at position 30 (Gln-30) is a Pyrrolidone carboxylic acid. Residues 30–130 (QALSYREAVL…DINCNELQSV (101 aa)) constitute a propeptide that is removed on maturation. 2 disulfides stabilise this stretch: Cys-85-Cys-96 and Cys-107-Cys-124. Residues 135–176 (PIRRPPIRPPFRPPFRPPVRPPIRPPFRPPFRPPIGPFPGRR) form a disordered region. A compositionally biased stretch (pro residues) spans 141-176 (IRPPFRPPFRPPVRPPIRPPFRPPFRPPIGPFPGRR). Pro-173 carries the proline amide modification. Positions 174-176 (GRR) are cleaved as a propeptide — removed in mature form.

Belongs to the cathelicidin family. In terms of processing, elastase is responsible for its maturation.

It is found in the secreted. Its function is as follows. Binds to the lipid A moiety of bacterial lipipolysaccharides (LPS), a glycolipid present in the outer membrane of all Gram-negative bacteria. Potent antimicrobial activity. This chain is Cathelicidin-2 (CATHL2), found in Ovis aries (Sheep).